The following is a 342-amino-acid chain: L-threonine 3-dehydrogenase (342 aa).

Cysteine 38 contributes to the Zn(2+) binding site. Residues threonine 40 and histidine 43 each act as charge relay system in the active site. Zn(2+) contacts are provided by histidine 63, glutamate 64, cysteine 93, cysteine 96, cysteine 99, and cysteine 107. NAD(+) contacts are provided by residues isoleucine 175, aspartate 195, arginine 200, 262 to 264, and 286 to 287; these read LGI and IY.

This sequence belongs to the zinc-containing alcohol dehydrogenase family. In terms of assembly, homotetramer. It depends on Zn(2+) as a cofactor.

It localises to the cytoplasm. It carries out the reaction L-threonine + NAD(+) = (2S)-2-amino-3-oxobutanoate + NADH + H(+). Its pathway is amino-acid degradation; L-threonine degradation via oxydo-reductase pathway; glycine from L-threonine: step 1/2. Its function is as follows. Catalyzes the NAD(+)-dependent oxidation of L-threonine to 2-amino-3-ketobutyrate. This is L-threonine 3-dehydrogenase from Burkholderia cenocepacia (strain ATCC BAA-245 / DSM 16553 / LMG 16656 / NCTC 13227 / J2315 / CF5610) (Burkholderia cepacia (strain J2315)).